We begin with the raw amino-acid sequence, 457 residues long: Bifunctional protein GlmU (457 aa).

The interval 1–230 is pyrophosphorylase; that stretch reads MPLSLPLHIV…PREVEGVNDL (230 aa). UDP-N-acetyl-alpha-D-glucosamine contacts are provided by residues 12–15, Lys-26, Gln-78, 83–84, 105–107, Gly-140, Glu-155, Asn-170, and Asn-228; these read LAAG, GT, and YGD. Mg(2+) is bound at residue Asp-107. Asn-228 provides a ligand contact to Mg(2+). The tract at residues 231–251 is linker; it reads WQLTQLERTWQIRAARALCLQ. The tract at residues 252-457 is N-acetyltransferase; the sequence is GARVADPARL…DGWQRPKKKT (206 aa). UDP-N-acetyl-alpha-D-glucosamine-binding residues include Arg-334 and Lys-352. The Proton acceptor role is filled by His-364. UDP-N-acetyl-alpha-D-glucosamine contacts are provided by Tyr-367 and Asn-378. Acetyl-CoA contacts are provided by residues Ala-381, 387-388, Ser-406, Ala-424, and Arg-441; that span reads NY.

It in the N-terminal section; belongs to the N-acetylglucosamine-1-phosphate uridyltransferase family. This sequence in the C-terminal section; belongs to the transferase hexapeptide repeat family. As to quaternary structure, homotrimer. It depends on Mg(2+) as a cofactor.

The protein resides in the cytoplasm. It catalyses the reaction alpha-D-glucosamine 1-phosphate + acetyl-CoA = N-acetyl-alpha-D-glucosamine 1-phosphate + CoA + H(+). It carries out the reaction N-acetyl-alpha-D-glucosamine 1-phosphate + UTP + H(+) = UDP-N-acetyl-alpha-D-glucosamine + diphosphate. It participates in nucleotide-sugar biosynthesis; UDP-N-acetyl-alpha-D-glucosamine biosynthesis; N-acetyl-alpha-D-glucosamine 1-phosphate from alpha-D-glucosamine 6-phosphate (route II): step 2/2. The protein operates within nucleotide-sugar biosynthesis; UDP-N-acetyl-alpha-D-glucosamine biosynthesis; UDP-N-acetyl-alpha-D-glucosamine from N-acetyl-alpha-D-glucosamine 1-phosphate: step 1/1. Its pathway is bacterial outer membrane biogenesis; LPS lipid A biosynthesis. Functionally, catalyzes the last two sequential reactions in the de novo biosynthetic pathway for UDP-N-acetylglucosamine (UDP-GlcNAc). The C-terminal domain catalyzes the transfer of acetyl group from acetyl coenzyme A to glucosamine-1-phosphate (GlcN-1-P) to produce N-acetylglucosamine-1-phosphate (GlcNAc-1-P), which is converted into UDP-GlcNAc by the transfer of uridine 5-monophosphate (from uridine 5-triphosphate), a reaction catalyzed by the N-terminal domain. The polypeptide is Bifunctional protein GlmU (Xylella fastidiosa (strain M12)).